Consider the following 263-residue polypeptide: Large ribosomal subunit protein uL29m (263 aa).

Disordered stretches follow at residues 51–92 and 208–263; these read ARVT…EELP and PEID…APRV. The segment covering 53 to 66 has biased composition (basic and acidic residues); sequence VTRDNSKQRGESAL. Over residues 214–223 the composition is skewed to polar residues; it reads NPENPYTPST. The segment covering 233–245 has biased composition (low complexity); the sequence is GAEASETQSTTTE. Residues 246–257 are compositionally biased toward polar residues; the sequence is IDPTTIPSSKSQ.

This sequence belongs to the universal ribosomal protein uL29 family. Component of the mitochondrial large ribosomal subunit (mt-LSU). Mature N.crassa 74S mitochondrial ribosomes consist of a small (37S) and a large (54S) subunit. The 37S small subunit contains a 16S ribosomal RNA (16S mt-rRNA) and 32 different proteins. The 54S large subunit contains a 23S rRNA (23S mt-rRNA) and 42 different proteins.

The protein localises to the mitochondrion. Functionally, component of the mitochondrial ribosome (mitoribosome), a dedicated translation machinery responsible for the synthesis of mitochondrial genome-encoded proteins, including at least some of the essential transmembrane subunits of the mitochondrial respiratory chain. The mitoribosomes are attached to the mitochondrial inner membrane and translation products are cotranslationally integrated into the membrane. This Neurospora crassa (strain ATCC 24698 / 74-OR23-1A / CBS 708.71 / DSM 1257 / FGSC 987) protein is Large ribosomal subunit protein uL29m (mrpl4).